Here is a 426-residue protein sequence, read N- to C-terminus: MSHQNQLIPQAYISNFHNRLTNEDDGIPIFTMAQQTRQHKRAKVVNYAEYDNDLFDEFNMNGSNFNNADTHYKDNAVSHENTPALTNGVTMDGSEYNVLENMNGADSIISNNKYDAGSNMVVESLSGLNSNNNASNGPSNKAQAQDIGNAVLPDLQDQHHNPFNILRYPKIRDTFINGKVVSPYRLNTDQETKANANSGEAIMIPITLDIEHMGHTIKDQFLWNYNDDSISPEEFASIYCKDLDMTSATLQTQIANIIKEQLKDLENIAATEIMSDLHVIINLTCNLQDRFFEDNFQWNLNDKSLTPERFATSIVQDLGLTREFIPLISQSLHETILKIKKDWVDGHLIQDHVPNDAAFGYLSGIRLDIDELGSNWCPRVEILTKEEIQKREIEKERNLRRLKRETDRLSRRGRRRLDDLETTMRM.

S78 bears the Phosphoserine mark. An interaction with STH1 region spans residues 201-242; it reads AIMIPITLDIEHMGHTIKDQFLWNYNDDSISPEEFASIYCKD.

It belongs to the SNF5 family. In terms of assembly, interacts directly with STH1. Component of the two forms of the RSC complex composed of at least either RSC1 or RSC2, and ARP7, ARP9, LDB7, NPL6, RSC3, RSC30, RSC4, RSC58, RSC6, RSC8, RSC9, SFH1, STH1, HTL1 and probably RTT102. The complexes interact with histone and histone variant components of centromeric chromatin. Phosphorylated in the G1 phase.

The protein localises to the nucleus. Functionally, component of the chromatin structure-remodeling complex (RSC), which is involved in transcription regulation and nucleosome positioning. RSC is responsible for the transfer of a histone octamer from a nucleosome core particle to naked DNA. The reaction requires ATP and involves an activated RSC-nucleosome intermediate. Remodeling reaction also involves DNA translocation, DNA twist and conformational change. As a reconfigurer of centromeric and flanking nucleosomes, RSC complex is required both for proper kinetochore function in chromosome segregation and, via a PKC1-dependent signaling pathway, for organization of the cellular cytoskeleton. This subunit is essential for mitotic growth and required for cell cycle progression. This chain is Chromatin structure-remodeling complex subunit SFH1 (SFH1), found in Saccharomyces cerevisiae (strain ATCC 204508 / S288c) (Baker's yeast).